We begin with the raw amino-acid sequence, 169 residues long: N-alpha-acetyltransferase 50 (169 aa).

In terms of domain architecture, N-acetyltransferase spans 6-155; it reads IELGDVTPHN…DAHVLQKNLK (150 aa). At T12 the chain carries Phosphothreonine. Y31 lines the substrate pocket. 2 positions are modified to N6-acetyllysine: K34 and K37. Y73 is an active-site residue. Substrate is bound at residue M75. Acetyl-CoA is bound at residue 77 to 90; it reads LGCLAPYRRLGIGT. At Y110 the chain carries Phosphotyrosine. The active site involves H112. A CoA-binding site is contributed by 117–126; it reads NESAIDFYRK. The interval 138 to 141 is substrate; it reads YYKR. K140 is modified (N6-acetyllysine).

The protein belongs to the acetyltransferase family. GNAT subfamily. As to quaternary structure, component of the N-terminal acetyltransferase E (NatE) complex at least composed of NAA10, NAA15 and NAA50. Interacts with NAA10. Interacts with NAA15. Predominantly interacts with NAA15 in the N-terminal acetyltransferase A complex (NatA complex); the interactions reduce the acetylation activity of the NatA complex. Component of the N-terminal acetyltransferase E (NatE)/HYPK complex at least composed of NAA10, NAA15, NAA50 and HYPK. Within the complex interacts with NAA15. Its capacity to interact with the NatA complex is reduced by HYPK. Interacts with NAA35.

Its subcellular location is the cytoplasm. It localises to the nucleus. It catalyses the reaction N-terminal L-methionyl-L-alanyl-[protein] + acetyl-CoA = N-terminal N(alpha)-acetyl-L-methionyl-L-alanyl-[protein] + CoA + H(+). It carries out the reaction N-terminal L-methionyl-L-seryl-[protein] + acetyl-CoA = N-terminal N(alpha)-acetyl-L-methionyl-L-seryl-[protein] + CoA + H(+). The enzyme catalyses N-terminal L-methionyl-L-valyl-[protein] + acetyl-CoA = N-terminal N(alpha)-acetyl-L-methionyl-L-valyl-[protein] + CoA + H(+). The catalysed reaction is N-terminal L-methionyl-L-threonyl-[protein] + acetyl-CoA = N-terminal N(alpha)-acetyl-L-methionyl-L-threonyl-[protein] + CoA + H(+). It catalyses the reaction N-terminal L-methionyl-L-lysyl-[protein] + acetyl-CoA = N-terminal N(alpha)-acetyl-L-methionyl-L-lysyl-[protein] + CoA + H(+). It carries out the reaction N-terminal L-methionyl-L-leucyl-[protein] + acetyl-CoA = N-terminal N(alpha)-acetyl-L-methionyl-L-leucyl-[protein] + CoA + H(+). The enzyme catalyses N-terminal L-methionyl-L-phenylalanyl-[protein] + acetyl-CoA = N-terminal N(alpha)-acetyl-L-methionyl-L-phenylalanyl-[protein] + CoA + H(+). The catalysed reaction is N-terminal L-methionyl-L-tyrosyl-[protein] + acetyl-CoA = N-terminal N(alpha)-acetyl-L-methionyl-L-tyrosyl-[protein] + CoA + H(+). Functionally, N-alpha-acetyltransferase that acetylates the N-terminus of proteins that retain their initiating methionine. Has a broad substrate specificity: able to acetylate the initiator methionine of most peptides, except for those with a proline in second position. Also displays N-epsilon-acetyltransferase activity by mediating acetylation of the side chain of specific lysines on proteins. Autoacetylates in vivo. The relevance of N-epsilon-acetyltransferase activity is however unclear: able to acetylate H4 in vitro, but this result has not been confirmed in vivo. Component of N-alpha-acetyltransferase complexes containing NAA10 and NAA15, which has N-alpha-acetyltransferase activity. Does not influence the acetyltransferase activity of NAA10. However, it negatively regulates the N-alpha-acetyltransferase activity of the N-terminal acetyltransferase A complex (also called the NatA complex). The multiprotein complexes probably constitute the major contributor for N-terminal acetylation at the ribosome exit tunnel, with NAA10 acetylating all amino termini that are devoid of methionine and NAA50 acetylating other peptides. Required for sister chromatid cohesion during mitosis by promoting binding of CDCA5/sororin to cohesin: may act by counteracting the function of NAA10. In Bos taurus (Bovine), this protein is N-alpha-acetyltransferase 50 (NAA50).